A 406-amino-acid chain; its full sequence is Secretion apparatus protein BsaZ (406 aa).

The next 4 membrane-spanning stretches (helical) occupy residues 28-48 (IVAL…VDLT), 80-100 (IAAP…LVQS), 137-157 (ALLY…LYHA), and 175-195 (IVLT…VLIL). A disordered region spans residues 341–406 (AANRGGPPPE…APARTGDQNA (66 aa)). A compositionally biased stretch (low complexity) spans 370-399 (DACADNAFPDDAPPGAAAPNAGSPDGGAPA).

The protein belongs to the type III secretion exporter family.

It is found in the cell membrane. Its function is as follows. Part of the bsa type III secretion system, is involved in the intracellular replication of invading bacteria inside the host cell. Probably necessary for the lysis of the vacuole membrane and escape into the host cell cytoplasm. The chain is Secretion apparatus protein BsaZ (bsaZ) from Burkholderia pseudomallei (strain 668).